Consider the following 300-residue polypeptide: UDP-N-acetylenolpyruvoylglucosamine reductase (300 aa).

Residues 27–192 (KVGGPADYLA…ISAKFALKPG (166 aa)) form the FAD-binding PCMH-type domain. The active site involves arginine 171. Serine 221 functions as the Proton donor in the catalytic mechanism. Glutamate 291 is an active-site residue.

Belongs to the MurB family. Requires FAD as cofactor.

It is found in the cytoplasm. The enzyme catalyses UDP-N-acetyl-alpha-D-muramate + NADP(+) = UDP-N-acetyl-3-O-(1-carboxyvinyl)-alpha-D-glucosamine + NADPH + H(+). The protein operates within cell wall biogenesis; peptidoglycan biosynthesis. Cell wall formation. In Streptococcus agalactiae serotype Ia (strain ATCC 27591 / A909 / CDC SS700), this protein is UDP-N-acetylenolpyruvoylglucosamine reductase.